Reading from the N-terminus, the 319-residue chain is Ferrochelatase (319 aa).

2 residues coordinate Fe cation: H193 and E274.

It belongs to the ferrochelatase family.

The protein localises to the cytoplasm. It carries out the reaction heme b + 2 H(+) = protoporphyrin IX + Fe(2+). Its pathway is porphyrin-containing compound metabolism; protoheme biosynthesis; protoheme from protoporphyrin-IX: step 1/1. Functionally, catalyzes the ferrous insertion into protoporphyrin IX. The chain is Ferrochelatase from Erwinia tasmaniensis (strain DSM 17950 / CFBP 7177 / CIP 109463 / NCPPB 4357 / Et1/99).